A 103-amino-acid chain; its full sequence is MARLALLLVLLAGTAVAGPPDAARQDELRHLVRQDCGSCHGLRMTGGLGRPITAAALAGRDVEDLSDVILDGMPGTAMPGWRPLLTEDDARWIADYLLKTETE.

Residues 1-17 (MARLALLLVLLAGTAVA) form the signal peptide. Cys36, Cys39, and His40 together coordinate heme c.

Binds 1 heme c group covalently per subunit.

Its subcellular location is the periplasm. In terms of biological role, monoheme c-type cytochrome. This chain is Cytochrome c55X (nirC), found in Paracoccus denitrificans (strain Pd 1222).